The following is a 349-amino-acid chain: Divinyl chlorophyll a/b light-harvesting protein PcbE (349 aa).

A run of 6 helical transmembrane segments spans residues 27–47, 65–85, 88–108, 201–221, 241–261, and 308–328; these read FIAAHIAHTGLIAFAAGGSTL, IFLAHLASIGIGFDEAGAWTG, VASIAIVHLVLSMVYGAGGLL, VLGGHAFLAFLEITGGAFHIA, AILSFSCAGLGWMAVVAAFWC, and LANVHYYFGFFFLQGHLWHAL.

Belongs to the PsbB/PsbC family. IsiA/Pcb subfamily. As to quaternary structure, the antenna complex consists of divinyl chlorophylls (a and b) and divinyl chlorophyll a/b binding proteins and binds more divinyl chlorophyll b than does the antenna complex from high-light-adapted Prochlorococcus. It depends on divinyl chlorophyll a as a cofactor. The cofactor is divinyl chlorophyll b.

The protein localises to the cellular thylakoid membrane. Functionally, the antenna complex functions as a light receptor, it captures and delivers excitation energy to photosystems II and I. The Prochlorales pcb genes are not related to higher plant LHCs. This is Divinyl chlorophyll a/b light-harvesting protein PcbE (pcbE) from Prochlorococcus marinus (strain NATL2A).